Reading from the N-terminus, the 749-residue chain is G-type lectin S-receptor-like serine/threonine-protein kinase At1g61460 (749 aa).

An N-terminal signal peptide occupies residues 1–25; sequence MRITFFASLLLFTNTIFISFSFAIA. The region spanning 26–145 is the Bulb-type lectin domain; that stretch reads GINKESPLSI…FSGRTLWQSF (120 aa). The Extracellular portion of the chain corresponds to 26 to 392; it reads GINKESPLSI…ELGGNKRKKT (367 aa). N-linked (GlcNAc...) asparagine glycosylation is found at asparagine 54, asparagine 95, asparagine 118, and asparagine 135. The EGF-like; atypical domain maps to 247–280; sequence PAHSCDYYGVCGPFGICVKSVCKCFKGFIPKYIE. Cystine bridges form between cysteine 251–cysteine 263 and cysteine 257–cysteine 268. Asparagine 286, asparagine 302, and asparagine 341 each carry an N-linked (GlcNAc...) asparagine glycan. The 83-residue stretch at 299-381 folds into the PAN domain; sequence CQENSTKKDA…GEILSIRLAR (83 aa). Intrachain disulfides connect cysteine 334/cysteine 355 and cysteine 338/cysteine 344. A helical transmembrane segment spans residues 393–413; the sequence is ITASIVSLSLFLILGSTAFGF. Residues 414–749 lie on the Cytoplasmic side of the membrane; sequence WRYRVKHNAS…EMTKSVILGR (336 aa). Residues 454–721 enclose the Protein kinase domain; sequence FSLSNKLGQG…DLPSPKQPTF (268 aa). ATP contacts are provided by residues 460 to 468 and lysine 482; that span reads LGQGGFGSV. The caM-binding stretch occupies residues 543-560; that stretch reads RKRLEIDWPKRFDIIQGI. The active-site Proton acceptor is aspartate 579.

This sequence belongs to the protein kinase superfamily. Ser/Thr protein kinase family.

The protein resides in the cell membrane. The catalysed reaction is L-seryl-[protein] + ATP = O-phospho-L-seryl-[protein] + ADP + H(+). It carries out the reaction L-threonyl-[protein] + ATP = O-phospho-L-threonyl-[protein] + ADP + H(+). This Arabidopsis thaliana (Mouse-ear cress) protein is G-type lectin S-receptor-like serine/threonine-protein kinase At1g61460.